The following is a 77-amino-acid chain: Probable Fe(2+)-trafficking protein (77 aa).

The protein belongs to the Fe(2+)-trafficking protein family. As to quaternary structure, monomer.

Could be a mediator in iron transactions between iron acquisition and iron-requiring processes, such as synthesis and/or repair of Fe-S clusters in biosynthetic enzymes. This Buchnera aphidicola subsp. Acyrthosiphon pisum (strain APS) (Acyrthosiphon pisum symbiotic bacterium) protein is Probable Fe(2+)-trafficking protein.